Reading from the N-terminus, the 46-residue chain is Light-harvesting protein B800/850/890 alpha-1 chain (46 aa).

The Cytoplasmic segment spans residues 1–12 (MWRLWKLYDPRR). A helical membrane pass occupies residues 13–33 (VLIGIFSWLAVLALVIHFILL). A bacteriochlorophyll is bound at residue H29. Residues 34–46 (STDRFNWVGGAAN) lie on the Periplasmic side of the membrane.

The protein belongs to the antenna complex alpha subunit family. As to quaternary structure, the core complex is formed by different alpha and beta chains, binding bacteriochlorophyll molecules, and arranged most probably in tetrameric structures disposed around the reaction center. The non-pigmented gamma chains may constitute additional components.

The protein localises to the cell inner membrane. Its function is as follows. Antenna complexes are light-harvesting systems, which transfer the excitation energy to the reaction centers. The polypeptide is Light-harvesting protein B800/850/890 alpha-1 chain (Halorhodospira halophila (strain DSM 244 / SL1) (Ectothiorhodospira halophila (strain DSM 244 / SL1))).